A 174-amino-acid polypeptide reads, in one-letter code: MNKETKQQQVAELHDKLQRAKAVFLADFRGMNVEQATTLRNELRSAAVEYKVVKNTLLELASRDTDKESLSQHFAGPTAIALSYDDPVSAAKVLSKFAKTQPNTFKLKAGVLTGKAISVADIQSLADLPSREVLIAKLLGTINAPVANFVGVLAAVPGSFVRALNAIKVQKEGN.

It belongs to the universal ribosomal protein uL10 family. As to quaternary structure, part of the ribosomal stalk of the 50S ribosomal subunit. The N-terminus interacts with L11 and the large rRNA to form the base of the stalk. The C-terminus forms an elongated spine to which L12 dimers bind in a sequential fashion forming a multimeric L10(L12)X complex.

In terms of biological role, forms part of the ribosomal stalk, playing a central role in the interaction of the ribosome with GTP-bound translation factors. This Geobacter sulfurreducens (strain ATCC 51573 / DSM 12127 / PCA) protein is Large ribosomal subunit protein uL10.